The chain runs to 200 residues: Probable E3 ubiquitin-protein ligase ATL45 (200 aa).

A helical transmembrane segment spans residues 26–46; sequence MVVILSALLCALVCVAGLAAV. An RING-type; atypical zinc finger spans residues 113 to 155; sequence CAICITEFSEGEEIRILPLCSHAFHVACIDKWLTSRSSCPSCR.

This sequence belongs to the RING-type zinc finger family. ATL subfamily. In terms of assembly, interacts with BIK1.

Its subcellular location is the membrane. It carries out the reaction S-ubiquitinyl-[E2 ubiquitin-conjugating enzyme]-L-cysteine + [acceptor protein]-L-lysine = [E2 ubiquitin-conjugating enzyme]-L-cysteine + N(6)-ubiquitinyl-[acceptor protein]-L-lysine.. It participates in protein modification; protein ubiquitination. Functionally, E3 ubiquitin-protein ligase that possess E3 ubiquitin ligase activity in vitro and mediates protein monoubiquitination. Triggers the monoubiquitination of phosphorylated BIK1 in response to pathogen-associated molecular pattern (PAMP) detection. May be involved in the early steps of the plant defense signaling pathway. The chain is Probable E3 ubiquitin-protein ligase ATL45 from Arabidopsis thaliana (Mouse-ear cress).